Reading from the N-terminus, the 550-residue chain is Carboxypeptidase Y homolog A (550 aa).

The signal sequence occupies residues 1-18; the sequence is MKSLVLGLLVGSAIASGP. A propeptide spanning residues 19–131 is cleaved from the precursor; sequence LQHVLHAPPD…KLSQYDLRIK (113 aa). The tract at residues 20 to 39 is disordered; it reads QHVLHAPPDPEPKPEPEPQV. 5 disulfides stabilise this stretch: C185–C424, C319–C333, C343–C366, C350–C359, and C388–C394. N-linked (GlcNAc...) asparagine glycosylation is found at N203 and N216. Residue S272 is part of the active site. An N-linked (GlcNAc...) asparagine glycan is attached at N289. Residue N387 is glycosylated (N-linked (GlcNAc...) asparagine). D463 is an active-site residue. N-linked (GlcNAc...) asparagine glycans are attached at residues N493 and N514. H525 is an active-site residue.

This sequence belongs to the peptidase S10 family.

The protein localises to the vacuole. The enzyme catalyses Release of a C-terminal amino acid with broad specificity.. Vacuolar carboxypeptidase involved in degradation of small peptides. Digests preferentially peptides containing an aliphatic or hydrophobic residue in P1' position, as well as methionine, leucine or phenylalanine in P1 position of ester substrate. The polypeptide is Carboxypeptidase Y homolog A (CPYA) (Paracoccidioides brasiliensis (strain Pb18)).